Reading from the N-terminus, the 187-residue chain is Elongation factor P (187 aa).

Belongs to the elongation factor P family.

It localises to the cytoplasm. It functions in the pathway protein biosynthesis; polypeptide chain elongation. Involved in peptide bond synthesis. Stimulates efficient translation and peptide-bond synthesis on native or reconstituted 70S ribosomes in vitro. Probably functions indirectly by altering the affinity of the ribosome for aminoacyl-tRNA, thus increasing their reactivity as acceptors for peptidyl transferase. The chain is Elongation factor P from Helicobacter hepaticus (strain ATCC 51449 / 3B1).